We begin with the raw amino-acid sequence, 202 residues long: Glycerol-3-phosphate acyltransferase (202 aa).

5 consecutive transmembrane segments (helical) span residues 3–23 (ILLATVAAYLIGSVSFAVVVS), 51–71 (KAAILTLVGDAFKGWLAVWLV), 74–94 (FGIGGEIGVALAAIAVFLGHL), 116–136 (AVHPALGLATALTWLIIAFFF), and 140–160 (SLAALVAAVFAPVFDVFLFGT).

This sequence belongs to the PlsY family. Probably interacts with PlsX.

Its subcellular location is the cell inner membrane. It catalyses the reaction an acyl phosphate + sn-glycerol 3-phosphate = a 1-acyl-sn-glycero-3-phosphate + phosphate. The protein operates within lipid metabolism; phospholipid metabolism. In terms of biological role, catalyzes the transfer of an acyl group from acyl-phosphate (acyl-PO(4)) to glycerol-3-phosphate (G3P) to form lysophosphatidic acid (LPA). This enzyme utilizes acyl-phosphate as fatty acyl donor, but not acyl-CoA or acyl-ACP. The sequence is that of Glycerol-3-phosphate acyltransferase from Burkholderia thailandensis (strain ATCC 700388 / DSM 13276 / CCUG 48851 / CIP 106301 / E264).